The following is a 286-amino-acid chain: uncharacterized protein (286 aa).

This is an uncharacterized protein from Acidianus sp. F28 (AFV-2).